We begin with the raw amino-acid sequence, 378 residues long: Flap endonuclease 1 (378 aa).

Residues 1–105 (MGIKGLNSII…HELDKRTERR (105 aa)) are N-domain. Aspartate 34 contacts Mg(2+). DNA is bound by residues arginine 47 and arginine 71. Residues aspartate 87, glutamate 156, glutamate 158, aspartate 177, and aspartate 179 each contribute to the Mg(2+) site. The interval 120-251 (EIMKHERRLV…VTALKLIKEH (132 aa)) is I-domain. Glutamate 156 is a binding site for DNA. DNA-binding residues include glycine 229 and aspartate 231. Aspartate 231 is a binding site for Mg(2+). Residues 337–345 (VQGRLDSFF) are interaction with PCNA. Low complexity predominate over residues 356 to 367 (AASARKAQAAKK). The segment at 356-378 (AASARKAQAAKKTNQKGKVLKRR) is disordered. The span at 368–378 (TNQKGKVLKRR) shows a compositional bias: basic residues.

It belongs to the XPG/RAD2 endonuclease family. FEN1 subfamily. Interacts with PCNA. Three molecules of FEN1 bind to one PCNA trimer with each molecule binding to one PCNA monomer. PCNA stimulates the nuclease activity without altering cleavage specificity. The cofactor is Mg(2+). In terms of processing, phosphorylated. Phosphorylation upon DNA damage induces relocalization to the nuclear plasma.

Its subcellular location is the nucleus. The protein localises to the nucleolus. The protein resides in the nucleoplasm. It is found in the mitochondrion. Its function is as follows. Structure-specific nuclease with 5'-flap endonuclease and 5'-3' exonuclease activities involved in DNA replication and repair. During DNA replication, cleaves the 5'-overhanging flap structure that is generated by displacement synthesis when DNA polymerase encounters the 5'-end of a downstream Okazaki fragment. It enters the flap from the 5'-end and then tracks to cleave the flap base, leaving a nick for ligation. Also involved in the long patch base excision repair (LP-BER) pathway, by cleaving within the apurinic/apyrimidinic (AP) site-terminated flap. Acts as a genome stabilization factor that prevents flaps from equilibrating into structures that lead to duplications and deletions. Also possesses 5'-3' exonuclease activity on nicked or gapped double-stranded DNA, and exhibits RNase H activity. Also involved in replication and repair of rDNA and in repairing mitochondrial DNA. This is Flap endonuclease 1 from Eremothecium gossypii (strain ATCC 10895 / CBS 109.51 / FGSC 9923 / NRRL Y-1056) (Yeast).